We begin with the raw amino-acid sequence, 341 residues long: HTH-type transcriptional repressor PurR (341 aa).

In terms of domain architecture, HTH lacI-type spans 2–56; that stretch reads ATIKDVAKRAGVSTTTVSHVINKTRFVAEETKAAVRAAIKELHYSPSAVARSLKV. Residues 4-23 constitute a DNA-binding region (H-T-H motif); it reads IKDVAKRAGVSTTTVSHVIN. The DNA-binding element occupies 48–56; it reads SAVARSLKV. Hypoxanthine contacts are provided by Tyr-73, Arg-190, Thr-192, Phe-221, and Asp-275.

In terms of assembly, homodimer.

It participates in purine metabolism; purine nucleotide biosynthesis [regulation]. Functionally, is the main repressor of the genes involved in the de novo synthesis of purine nucleotides, regulating purB, purC, purEK, purF, purHD, purL, purMN and guaBA expression. PurR is allosterically activated to bind its cognate DNA by binding the purine corepressors, hypoxanthine or guanine, thereby effecting transcription repression. The chain is HTH-type transcriptional repressor PurR from Pectobacterium carotovorum subsp. carotovorum (strain PC1).